A 292-amino-acid polypeptide reads, in one-letter code: Protease HtpX (292 aa).

A run of 2 helical transmembrane segments spans residues 5 to 25 and 34 to 54; these read IFLF…VMSL and SGLL…SLLL. Position 140 (histidine 140) interacts with Zn(2+). The active site involves glutamate 141. Histidine 144 serves as a coordination point for Zn(2+). The next 2 membrane-spanning stretches (helical) occupy residues 155–175 and 193–213; these read LLQG…GGII and IIVF…AMWF. Glutamate 218 provides a ligand contact to Zn(2+).

This sequence belongs to the peptidase M48B family. Requires Zn(2+) as cofactor.

Its subcellular location is the cell inner membrane. This Xanthomonas axonopodis pv. citri (strain 306) protein is Protease HtpX.